Here is a 315-residue protein sequence, read N- to C-terminus: Homoserine kinase (315 aa).

Position 91–101 (91–101 (PIGSGLGSSAS)) interacts with ATP.

The protein belongs to the GHMP kinase family. Homoserine kinase subfamily.

The protein resides in the cytoplasm. The catalysed reaction is L-homoserine + ATP = O-phospho-L-homoserine + ADP + H(+). It functions in the pathway amino-acid biosynthesis; L-threonine biosynthesis; L-threonine from L-aspartate: step 4/5. In terms of biological role, catalyzes the ATP-dependent phosphorylation of L-homoserine to L-homoserine phosphate. The protein is Homoserine kinase of Buchnera aphidicola subsp. Cinara cedri (strain Cc).